Reading from the N-terminus, the 144-residue chain is Transcription antitermination protein NusB (144 aa).

Belongs to the NusB family.

In terms of biological role, involved in transcription antitermination. Required for transcription of ribosomal RNA (rRNA) genes. Binds specifically to the boxA antiterminator sequence of the ribosomal RNA (rrn) operons. The sequence is that of Transcription antitermination protein NusB from Blochmanniella pennsylvanica (strain BPEN).